The sequence spans 399 residues: Ribonucleoside-diphosphate reductase small chain 1 (399 aa).

S15, S24, and S41 each carry phosphoserine. D145, E176, and H179 together coordinate Fe cation. Y183 is a catalytic residue. Positions 239, 273, and 276 each coordinate Fe cation.

It belongs to the ribonucleoside diphosphate reductase small chain family. As to quaternary structure, heterotetramer of two large (R1) and two small (R2) subunits. S.cerevisiae has two different R1 subunits (RNR1 and RNR3) and two different R2 subunits (RNR2 and RNR4). The functional form of the small subunits is a RNR2-RNR4 heterodimer, where RNR2 provides the iron-radical center and RNR4 is required for proper folding of RNR2 and assembly with the large subunits. Under normal growth conditions, the active form of the large subunits is a homodimer of the constitutively expressed RNR1. In damaged cells or cells arrested for DNA synthesis, the reductase consists of multiple species because of the association of the small subunits (RNR2-RNR4) with either the RNR1 homodimer or a heterodimer of RNR1 and the damage-inducible RNR3. Interacts with DIF1. Fe cation serves as cofactor.

It is found in the nucleus. The enzyme catalyses a 2'-deoxyribonucleoside 5'-diphosphate + [thioredoxin]-disulfide + H2O = a ribonucleoside 5'-diphosphate + [thioredoxin]-dithiol. Functionally, provides the precursors necessary for DNA synthesis. Catalyzes the biosynthesis of deoxyribonucleotides from the corresponding ribonucleotides. RNR2 provides the diiron-tyrosyl radical center. This Saccharomyces cerevisiae (strain ATCC 204508 / S288c) (Baker's yeast) protein is Ribonucleoside-diphosphate reductase small chain 1 (RNR2).